Reading from the N-terminus, the 231-residue chain is Lipoprotein-releasing system ATP-binding protein LolD (231 aa).

An ABC transporter domain is found at 6–230 (LSCKNVSKKY…DGELELVINS (225 aa)). 42 to 49 (GLSGSGKT) provides a ligand contact to ATP.

The protein belongs to the ABC transporter superfamily. Lipoprotein translocase (TC 3.A.1.125) family. The complex is composed of two ATP-binding proteins (LolD) and two transmembrane proteins (LolC and LolE).

It localises to the cell inner membrane. Part of the ABC transporter complex LolCDE involved in the translocation of mature outer membrane-directed lipoproteins, from the inner membrane to the periplasmic chaperone, LolA. Responsible for the formation of the LolA-lipoprotein complex in an ATP-dependent manner. This is Lipoprotein-releasing system ATP-binding protein LolD from Francisella tularensis subsp. holarctica (strain OSU18).